The following is a 238-amino-acid chain: Flagellar L-ring protein (238 aa).

Positions 1–16 are cleaved as a signal peptide; it reads MNKAILAVAMVLLLAG. A lipid anchor (N-palmitoyl cysteine) is attached at C17. A lipid anchor (S-diacylglycerol cysteine) is attached at C17.

The protein belongs to the FlgH family. The basal body constitutes a major portion of the flagellar organelle and consists of four rings (L,P,S, and M) mounted on a central rod.

The protein localises to the cell outer membrane. Its subcellular location is the bacterial flagellum basal body. Assembles around the rod to form the L-ring and probably protects the motor/basal body from shearing forces during rotation. The sequence is that of Flagellar L-ring protein from Brucella abortus (strain 2308).